The chain runs to 127 residues: Calcitonin receptor-stimulating peptide 1 (127 aa).

An N-terminal signal peptide occupies residues 1-25; that stretch reads MGFWKFSPFLVLGILALYQVGFLQA. Residues 26–79 constitute a propeptide that is removed on maturation; that stretch reads APFRSALENPPDSGVRNEEELRLLLAAVMKDYMQMKTHELEQEQETEGSRVAVQ. Cysteine 83 and cysteine 88 are oxidised to a cystine.

This sequence belongs to the calcitonin family.

The protein localises to the secreted. Stimulates cAMP production in porcine kidney cell line LLC-PK1 via the calcitonin receptor (CT) but not via the CT-like (CL) receptor. The protein is Calcitonin receptor-stimulating peptide 1 (CRSP1) of Canis lupus familiaris (Dog).